A 644-amino-acid polypeptide reads, in one-letter code: Kelch-like protein 34 (644 aa).

The BTB domain occupies 29–96; sequence CDVTLETEGS…IYTAWLSLSM (68 aa). The BACK domain occupies 131–238; it reads CCFAANVAAR…PADVLRRVYS (108 aa). The interval 304 to 329 is disordered; it reads AARGQVAAPEPEEEEEELEEEEEEEE. Residues 313–329 are compositionally biased toward acidic residues; it reads EPEEEEEELEEEEEEEE. Kelch repeat units follow at residues 320 to 366, 367 to 425, 426 to 473, 475 to 526, 528 to 571, and 573 to 623; these read ELEE…TAGN, FLFV…AVGE, RLLA…VGDR, VVYI…VLRG, VFAF…VVEE, and ALLL…VLQL.

The chain is Kelch-like protein 34 (KLHL34) from Homo sapiens (Human).